A 185-amino-acid chain; its full sequence is ATP synthase subunit b 2 (185 aa).

The interval 1-24 is disordered; it reads MADSHGNAKGATAHTEAGGGHKAP. A helical transmembrane segment spans residues 34 to 56; it reads ASQLVSLTIAFVALYLISSRLAL.

Belongs to the ATPase B chain family. F-type ATPases have 2 components, F(1) - the catalytic core - and F(0) - the membrane proton channel. F(1) has five subunits: alpha(3), beta(3), gamma(1), delta(1), epsilon(1). F(0) has three main subunits: a(1), b(2) and c(10-14). The alpha and beta chains form an alternating ring which encloses part of the gamma chain. F(1) is attached to F(0) by a central stalk formed by the gamma and epsilon chains, while a peripheral stalk is formed by the delta and b chains.

The protein localises to the cell inner membrane. Its function is as follows. F(1)F(0) ATP synthase produces ATP from ADP in the presence of a proton or sodium gradient. F-type ATPases consist of two structural domains, F(1) containing the extramembraneous catalytic core and F(0) containing the membrane proton channel, linked together by a central stalk and a peripheral stalk. During catalysis, ATP synthesis in the catalytic domain of F(1) is coupled via a rotary mechanism of the central stalk subunits to proton translocation. Component of the F(0) channel, it forms part of the peripheral stalk, linking F(1) to F(0). The b'-subunit is a diverged and duplicated form of b found in plants and photosynthetic bacteria. The chain is ATP synthase subunit b 2 (atpF2) from Nitrobacter hamburgensis (strain DSM 10229 / NCIMB 13809 / X14).